The chain runs to 74 residues: U4-theraphotoxin-Cg1a (74 aa).

An N-terminal signal peptide occupies residues 1 to 19 (MNATIFALLLLLNLAMYNA). Residues 20-39 (AEQSSETDMDDTLLIPEINR) constitute a propeptide that is removed on maturation. 3 cysteine pairs are disulfide-bonded: Cys42–Cys56, Cys49–Cys61, and Cys55–Cys71.

It belongs to the neurotoxin 36 family. 01 subfamily. As to expression, expressed by the venom gland.

It is found in the secreted. Probable ion channel inhibitor. The chain is U4-theraphotoxin-Cg1a from Chilobrachys guangxiensis (Chinese earth tiger tarantula).